We begin with the raw amino-acid sequence, 270 residues long: Hemin import ATP-binding protein HmuV (270 aa).

One can recognise an ABC transporter domain in the interval 5 to 242; that stretch reads LEAEAATYSV…SLINRVFDIE (238 aa). ATP is bound at residue 37–44; it reads GPNGAGKS.

This sequence belongs to the ABC transporter superfamily. Heme (hemin) importer (TC 3.A.1.14.5) family. The complex is composed of two ATP-binding proteins (HmuV), two transmembrane proteins (HmuU) and a solute-binding protein (HmuT).

The protein localises to the cell inner membrane. Functionally, part of the ABC transporter complex HmuTUV involved in hemin import. Responsible for energy coupling to the transport system. The protein is Hemin import ATP-binding protein HmuV of Rhodopseudomonas palustris (strain BisA53).